Here is a 175-residue protein sequence, read N- to C-terminus: MSRVAKKPISIPKGVEVSVQSDMLTVKGVKGVLTFPKSDNVNVVMDGDILTLSANDHSHVSLAGTVRAILSNMIKGVSIGFERKLELVGVGYRASMQGKDLNLSLGFSHPLLFVPPEGINLLTPSQTEVVVQGIDKQRVGEVAAKIRNFRPPEPYKGKGLKYATEAIMRKEAKKA.

The protein belongs to the universal ribosomal protein uL6 family. Part of the 50S ribosomal subunit.

In terms of biological role, this protein binds to the 23S rRNA, and is important in its secondary structure. It is located near the subunit interface in the base of the L7/L12 stalk, and near the tRNA binding site of the peptidyltransferase center. The chain is Large ribosomal subunit protein uL6 from Xylella fastidiosa (strain M23).